The primary structure comprises 262 residues: CD99 antigen-like protein 2 (262 aa).

The first 25 residues, 1 to 25 (MVAWRSAFLVCLAFSLATLVQRGSG), serve as a signal peptide directing secretion. At 26–185 (DFDDFNLEDA…PGSGMVAEPG (160 aa)) the chain is on the extracellular side. Residues 38-181 (ETSSVKQPWD…SNDDPGSGMV (144 aa)) are disordered. 2 stretches are compositionally biased toward low complexity: residues 49–60 (TTTTTTNRPGTT) and 98–119 (VTTT…GNDF). Basic and acidic residues-rich tracts occupy residues 125 to 136 (LDDRNDRDDGRR) and 159 to 168 (YKPDKGKGDG). A glycan (O-linked (Xyl...) (chondroitin sulfate) serine) is linked at serine 178. A helical transmembrane segment spans residues 186 to 206 (TIAGVASALAMALIGAVSSYI). Topologically, residues 207-262 (SYQQKKFCFSIQQGLNADYVKGENLEAVVCEEPQVKYSTLHTQSAEPPPPPEPARI) are cytoplasmic.

This sequence belongs to the CD99 family. O-glycosylated. As to expression, detected in cerebrospinal fluid (at protein level). Expressed in many tissues, with low expression in thymus.

The protein localises to the cell membrane. It is found in the cell junction. It localises to the secreted. In terms of biological role, plays a role in a late step of leukocyte extravasation helping cells to overcome the endothelial basement membrane. Acts at the same site as, but independently of, PECAM1. Homophilic adhesion molecule, but these interactions may not be required for cell aggregation. The sequence is that of CD99 antigen-like protein 2 (CD99L2) from Homo sapiens (Human).